The sequence spans 375 residues: Chanoclavine-I aldehyde reductase ifgG (375 aa).

FMN is bound by residues 31 to 33 (PTT), Ala-66, Gln-108, and His-176. 2 residues coordinate substrate: His-176 and Asn-179. Tyr-181 acts as the Proton donor in catalysis. FMN contacts are provided by residues Lys-228, Gly-300, 325-326 (GR), and Arg-326. Position 353 (Tyr-353) interacts with substrate.

It belongs to the NADH:flavin oxidoreductase/NADH oxidase family. FMN is required as a cofactor.

It catalyses the reaction dihydrochanoclavine-I aldehyde + NADP(+) = chanoclavine-I aldehyde + NADPH + H(+). Its pathway is alkaloid biosynthesis; ergot alkaloid biosynthesis. Functionally, chanoclavine-I aldehyde reductase; part of the gene cluster that mediates the biosynthesis of isofumigaclavines, fungal ergot alkaloids. The tryptophan dimethylallyltransferase ifgA catalyzes the first step of ergot alkaloid biosynthesis by condensing dimethylallyl diphosphate (DMAP) and tryptophan to form 4-dimethylallyl-L-tryptophan. The second step is catalyzed by the methyltransferase ifgB that methylates 4-dimethylallyl-L-tryptophan in the presence of S-adenosyl-L-methionine, resulting in the formation of N-methyl-dimethylallyl-L-tryptophan. The catalase ifgD and the FAD-dependent oxidoreductase ifgC then transform N-methyl-dimethylallyl-L-tryptophan to chanoclavine-I which is further oxidized by ifgE in the presence of NAD(+), resulting in the formation of chanoclavine-I aldehyde. The chanoclavine-I aldehyde reductases ifgG and/or fgaOx3 reduce chanoclavine-I aldehyde to dihydrochanoclavine-I aldehyde that spontaneously dehydrates to form 6,8-dimethyl-6,7-didehydroergoline. The festuclavine dehydrogenases ifgF1 and/or ifgF2 then catalyze the reduction of 6,8-dimethyl-6,7-didehydroergoline to form festuclavine. Hydrolysis of festuclavine by a yet undetermined cytochrome P450 monooxygenase (called ifgH) then leads to the formation of isofumigaclavine B which is in turn acetylated by ifgI to isofumigaclavine A. Penicillium roqueforti has interestingly at least two sets of genes for the consumption of chanoclavine-I aldehyde on three different loci, the OYEs ifgG/fgaOx3 and the festuclavine synthase homologs ifgF1/ifgF2. The reason for the duplication of these genes is unclear, probably to ensure the conversion of chanoclavine-I aldehyde by differential gene expression under various environmental conditions. The chain is Chanoclavine-I aldehyde reductase ifgG from Penicillium roqueforti (strain FM164).